Consider the following 125-residue polypeptide: Large ribosomal subunit protein bL12 (125 aa).

It belongs to the bacterial ribosomal protein bL12 family. Homodimer. Part of the ribosomal stalk of the 50S ribosomal subunit. Forms a multimeric L10(L12)X complex, where L10 forms an elongated spine to which 2 to 4 L12 dimers bind in a sequential fashion. Binds GTP-bound translation factors.

Forms part of the ribosomal stalk which helps the ribosome interact with GTP-bound translation factors. Is thus essential for accurate translation. The sequence is that of Large ribosomal subunit protein bL12 from Thermoanaerobacter pseudethanolicus (strain ATCC 33223 / 39E) (Clostridium thermohydrosulfuricum).